The following is a 382-amino-acid chain: MGAFLDKPKMEKHNAQGQGNGLRYGLSSMQGWRVEMEDAHTAVIGLPSGLETWSFFAVYDGHAGSQVAKYCCEHLLDHITNNQDFKGSAGAPSVENVKNGIRTGFLEIDEHMRVMSEKKHGADRSGSTAVGVLISPQHTYFINCGDSRGLLCRNRKVHFFTQDHKPSNPLEKERIQNAGGSVMIQRVNGSLAVSRALGDFDYKCVHGKGPTEQLVSPEPEVHDIERSEEDDQFIILACDGIWDVMGNEELCDFVRSRLEVTDDLEKVCNEVVDTCLYKGSRDNMSVILICFPNAPKVSPEAVKKEAELDKYLECRVEEILKKQGEGVPDLVHVMRTLASENIPSLPPGGELASKRNVIEAVYNRLNPYKNDDTDSTSTDDMW.

A lipid anchor (N-myristoyl glycine) is attached at G2. In terms of domain architecture, PPM-type phosphatase spans 23-291 (RYGLSSMQGW…DNMSVILICF (269 aa)). Residues D60, G61, D239, and D282 each contribute to the Mn(2+) site. Phosphoserine occurs at positions 375 and 377.

The protein belongs to the PP2C family. As to quaternary structure, monomer. Interacts with SMAD2; the interaction dephosphorylates SMAD2 in its C-terminal SXS motif resulting in disruption of the SMAD2/SMAD4 complex, SMAD2 nuclear export and termination of the TGF-beta-mediated signaling. Interacts with SMAD2; the interaction dephosphorylates SMAD2 in its C-terminal SXS motif resulting in disruption of the SMAD2/SMAD4 complex, SMAD2 nuclear export and termination of the TGF-beta-mediated signaling. Interacts with the phosphorylated form of IKBKB/IKKB. The cofactor is Mg(2+). It depends on Mn(2+) as a cofactor. In terms of processing, N-myristoylation is essential for the recognition of its substrates for dephosphorylation.

It localises to the nucleus. It is found in the cytoplasm. Its subcellular location is the cytosol. The protein localises to the membrane. It carries out the reaction O-phospho-L-seryl-[protein] + H2O = L-seryl-[protein] + phosphate. The enzyme catalyses O-phospho-L-threonyl-[protein] + H2O = L-threonyl-[protein] + phosphate. Enzyme with a broad specificity. Negatively regulates TGF-beta signaling through dephosphorylating SMAD2 and SMAD3, resulting in their dissociation from SMAD4, nuclear export of the SMADs and termination of the TGF-beta-mediated signaling. Dephosphorylates PRKAA1 and PRKAA2. Plays an important role in the termination of TNF-alpha-mediated NF-kappa-B activation through dephosphorylating and inactivating IKBKB/IKKB. The polypeptide is Protein phosphatase 1A (PPM1A) (Oryctolagus cuniculus (Rabbit)).